We begin with the raw amino-acid sequence, 119 residues long: Ethylene-responsive proteinase inhibitor 1 (119 aa).

Residues 1-27 (MEANKSMVKLVAFLIILVSSCFQSLTA) form the signal peptide. Residues 28 to 48 (QDLEIEVSDGLNVLQVHDVSQ) constitute a propeptide that is removed on maturation.

Belongs to the protease inhibitor I13 (potato type I serine protease inhibitor) family.

The protein localises to the secreted. This chain is Ethylene-responsive proteinase inhibitor 1, found in Solanum lycopersicum (Tomato).